A 1028-amino-acid polypeptide reads, in one-letter code: Receptor-type guanylate cyclase gcy-13 (1028 aa).

6 N-linked (GlcNAc...) asparagine glycosylation sites follow: Asn-58, Asn-156, Asn-324, Asn-337, Asn-377, and Asn-394. Residues Ile-438 to Phe-458 traverse the membrane as a helical segment. The Cytoplasmic portion of the chain corresponds to Leu-459–Ala-1028. The interval Glu-491 to Gly-511 is disordered. The segment covering Arg-497–Gly-511 has biased composition (low complexity). Residues Leu-499–Met-770 form the Protein kinase domain. The stretch at Ser-786–Leu-817 forms a coiled coil. Positions Thr-844 to Glu-974 constitute a Guanylate cyclase domain.

The protein belongs to the adenylyl cyclase class-4/guanylyl cyclase family. In terms of tissue distribution, expressed bilaterally in RIM interneurons.

The protein localises to the cell membrane. The catalysed reaction is GTP = 3',5'-cyclic GMP + diphosphate. Guanylate cyclase involved in the production of the second messenger cGMP. The polypeptide is Receptor-type guanylate cyclase gcy-13 (Caenorhabditis elegans).